The sequence spans 36 residues: Pancreatic polypeptide (36 aa).

Tyr-36 is subject to Tyrosine amide.

This sequence belongs to the NPY family.

Its subcellular location is the secreted. In terms of biological role, hormone secreted by pancreatic cells that acts as a regulator of pancreatic and gastrointestinal functions. The protein is Pancreatic polypeptide (PPY) of Struthio camelus (Common ostrich).